The primary structure comprises 479 residues: ATP synthase subunit beta (479 aa).

Position 168-175 (168-175 (GGAGVGKT)) interacts with ATP.

This sequence belongs to the ATPase alpha/beta chains family. F-type ATPases have 2 components, CF(1) - the catalytic core - and CF(0) - the membrane proton channel. CF(1) has five subunits: alpha(3), beta(3), gamma(1), delta(1), epsilon(1). CF(0) has three main subunits: a(1), b(2) and c(9-12). The alpha and beta chains form an alternating ring which encloses part of the gamma chain. CF(1) is attached to CF(0) by a central stalk formed by the gamma and epsilon chains, while a peripheral stalk is formed by the delta and b chains.

The protein resides in the cell membrane. The enzyme catalyses ATP + H2O + 4 H(+)(in) = ADP + phosphate + 5 H(+)(out). Produces ATP from ADP in the presence of a proton gradient across the membrane. The catalytic sites are hosted primarily by the beta subunits. The sequence is that of ATP synthase subunit beta from Frankia alni (strain DSM 45986 / CECT 9034 / ACN14a).